Here is a 135-residue protein sequence, read N- to C-terminus: Holo-[acyl-carrier-protein] synthase (135 aa).

Positions 7 and 57 each coordinate Mg(2+).

The protein belongs to the P-Pant transferase superfamily. AcpS family. Mg(2+) serves as cofactor.

It is found in the cytoplasm. It carries out the reaction apo-[ACP] + CoA = holo-[ACP] + adenosine 3',5'-bisphosphate + H(+). Functionally, transfers the 4'-phosphopantetheine moiety from coenzyme A to a Ser of acyl-carrier-protein. This is Holo-[acyl-carrier-protein] synthase from Corynebacterium glutamicum (strain R).